Reading from the N-terminus, the 220-residue chain is Botcinic acid biosynthesis cluster B protein 12 (220 aa).

Its pathway is polyketide biosynthesis. Part of the gene cluster B that mediates the biosynthesis of botcinic acid and its botcinin derivatives, acetate-derived polyketides that contribute to virulence when combined with the sesquiterpene botrydial. Botcinic acid and its derivatives have been shown to induce chlorosis and necrosis during host plant infection, but also have antifungal activities. Two polyketide synthases, BOA6 and BOA9, are involved in the biosynthesis of botcinins. BOA6 mediates the formation of the per-methylated tetraketide core by condensation of four units of malonyl-CoA with one unit of acetyl-CoA, which would be methylated in activated methylene groups to yield a bicyclic acid intermediate that could then either be converted to botrylactone derivatives or lose the starter acetate unit through a retro-Claisen type C-C bond cleavage to yield botcinin derivatives. The second polyketide synthase, BOA9, is probably required for the biosynthesis of the tetraketide side chain of botcinins. The methyltransferase (MT) domain within BOA6 is probably responsible for the incorporation of four methyl groups. The trans-enoyl reductase BOA5 might take over the enoyl reductase function of BOA6 that misses an ER domain. The monooxygenases BOA2, BOA3 and BOA4 might be involved in further hydroxylations at C4, C5 and C8, whereas BOA7, close to BOA9, could potentially be involved in the hydroxylation at C4 in the side chain of botcinins. The protein is Botcinic acid biosynthesis cluster B protein 12 of Botryotinia fuckeliana (strain B05.10) (Noble rot fungus).